The sequence spans 295 residues: 4-diphosphocytidyl-2-C-methyl-D-erythritol kinase (295 aa).

Lys-15 is an active-site residue. Pro-101 to Ser-111 is a binding site for ATP. Residue Asp-143 is part of the active site.

Belongs to the GHMP kinase family. IspE subfamily.

The catalysed reaction is 4-CDP-2-C-methyl-D-erythritol + ATP = 4-CDP-2-C-methyl-D-erythritol 2-phosphate + ADP + H(+). Its pathway is isoprenoid biosynthesis; isopentenyl diphosphate biosynthesis via DXP pathway; isopentenyl diphosphate from 1-deoxy-D-xylulose 5-phosphate: step 3/6. Its function is as follows. Catalyzes the phosphorylation of the position 2 hydroxy group of 4-diphosphocytidyl-2C-methyl-D-erythritol. The protein is 4-diphosphocytidyl-2-C-methyl-D-erythritol kinase of Caulobacter vibrioides (strain ATCC 19089 / CIP 103742 / CB 15) (Caulobacter crescentus).